We begin with the raw amino-acid sequence, 204 residues long: Putative 3-methyladenine DNA glycosylase (204 aa).

The protein belongs to the DNA glycosylase MPG family.

The chain is Putative 3-methyladenine DNA glycosylase from Bacillus cytotoxicus (strain DSM 22905 / CIP 110041 / 391-98 / NVH 391-98).